We begin with the raw amino-acid sequence, 113 residues long: U11-theraphotoxin-Hhn1a (113 aa).

The N-terminal stretch at Met1–Ala21 is a signal peptide. A propeptide spanning residues Asp22–Arg74 is cleaved from the precursor. Residues Leu60 to Asn69 show a composition bias toward basic and acidic residues. The disordered stretch occupies residues Leu60–Asp83. Intrachain disulfides connect Cys75–Cys90, Cys82–Cys95, and Cys89–Cys110.

The protein belongs to the neurotoxin 14 (magi-1) family. 01 (HNTX-16) subfamily. Expressed by the venom gland.

Its subcellular location is the secreted. In terms of biological role, probable ion channel inhibitor. The protein is U11-theraphotoxin-Hhn1a of Cyriopagopus hainanus (Chinese bird spider).